Consider the following 212-residue polypeptide: MEVLRRSSVFAAEIMDAFDRSPTDKELVAQAKALGREYVHARLLRAGLSWSAPERAAPVPGRLAEVCAVLLRLGDELEMIRPSVYRNVARQLHISLQSEPVVTDAFLAVAGHIFSAGITWGKVVSLYAVAAGLAVDCVRQAQPAMVHALVDCLGEFVRKTLATWLRRRGGWTDVLKCVVSTDPGLRSHWLVAALCSFGRFLKAAFFVLLPER.

The residue at position 7 (serine 7) is a Phosphoserine. Positions methionine 15–arginine 45 are interactions with ITPR1. Residues lysine 25 and lysine 32 each participate in a glycyl lysine isopeptide (Lys-Gly) (interchain with G-Cter in ubiquitin) cross-link. Positions lysine 32–leucine 44 match the BH4 motif. The short motif at valine 66 to proline 82 is the BH3 element. Positions leucine 70–glutamate 78 are nuclear export signal. A BH1 motif is present at residues histidine 112–alanine 131. Glycyl lysine isopeptide (Lys-Gly) (interchain with G-Cter in ubiquitin) cross-links involve residues lysine 159 and lysine 176. The BH2 motif lies at tryptophan 164–valine 178. The helical transmembrane segment at tryptophan 189 to leucine 209 threads the bilayer.

It belongs to the Bcl-2 family. Monomer; positively regulates apoptotic process. Homodimer. Heterodimer. Oligomer; promoted by apoptotic stimuli and BH3-only proteins; mediates constitutive activation. Interacts (via BH4 domain) with ITPR1; enhances BOK expression and stabilization; limits apoptosis and prevents ubiquitination and then degradation; protects ITPR1 from proteolysis by CASP3 during apoptosis. Interacts with ITPR2 and ITPR3; binds most strongly to ITPR2, and barely to ITPR3; regulates their expression. Interacts with XPO1; translocates to the cytoplasm. Interacts with BNIP3; promotes oligomerization. Ubiquitinated by AMFR/gp78 E3 ubiquitin ligase complex; mediates degradation by ubiquitin-proteasome pathway in a VCP/p97-dependent manner; prevents from pro-apoptotic activity; promotes degradation of newly synthesized proteins that are not ITPR1 associated. In terms of tissue distribution, expressed mainly in oocytes; weak expression in granulosa cells of the developing follicles. In adult human ovaries, expressed in granulosa cells at all follicular stages, but expression in primordial/primary follicles granulosa cell is stronger than in secondary and antral follicles.

The protein localises to the mitochondrion membrane. Its subcellular location is the endoplasmic reticulum membrane. It is found in the mitochondrion inner membrane. It localises to the cytoplasm. The protein resides in the nucleus. The protein localises to the mitochondrion. Its subcellular location is the endoplasmic reticulum. It is found in the mitochondrion outer membrane. It localises to the early endosome membrane. The protein resides in the recycling endosome membrane. The protein localises to the nucleus outer membrane. Its subcellular location is the golgi apparatus. It is found in the cis-Golgi network membrane. It localises to the trans-Golgi network membrane. The protein resides in the membrane. Its function is as follows. Apoptosis regulator that functions through different apoptotic signaling pathways. Plays a roles as pro-apoptotic protein that positively regulates intrinsic apoptotic process in a BAX- and BAK1-dependent manner or in a BAX- and BAK1-independent manner. In response to endoplasmic reticulum stress promotes mitochondrial apoptosis through downstream BAX/BAK1 activation and positive regulation of PERK-mediated unfolded protein response. Activates apoptosis independently of heterodimerization with survival-promoting BCL2 and BCL2L1 through induction of mitochondrial outer membrane permeabilization, in a BAX- and BAK1-independent manner, in response to inhibition of ERAD-proteasome degradation system, resulting in cytochrome c release. In response to DNA damage, mediates intrinsic apoptotic process in a TP53-dependent manner. Plays a role in granulosa cell apoptosis by CASP3 activation. Plays a roles as anti-apoptotic protein during neuronal apoptotic process, by negatively regulating poly ADP-ribose polymerase-dependent cell death through regulation of neuronal calcium homeostasis and mitochondrial bioenergetics in response to NMDA excitation. In addition to its role in apoptosis, may regulate trophoblast cell proliferation during the early stages of placental development, by acting on G1/S transition through regulation of CCNE1 expression. May also play a role as an inducer of autophagy by disrupting interaction between MCL1 and BECN1. Pro-apoptotic molecule exerting its function through the mitochondrial pathway. This chain is Bcl-2-related ovarian killer protein, found in Homo sapiens (Human).